We begin with the raw amino-acid sequence, 403 residues long: Peroxisomal membrane protein PEX13 (403 aa).

Pro residues predominate over residues 1-11 (MASQPPPPPKP). Residues 1-69 (MASQPPPPPK…SQQTGSGNLN (69 aa)) form a disordered region. At 1 to 134 (MASQPPPPPK…SSRGAFQSIE (134 aa)) the chain is on the peroxisomal matrix side. Polar residues predominate over residues 59–69 (PSQQTGSGNLN). The helical transmembrane segment at 135 to 155 (SIVHAFASVSMMMDATFSAVY) threads the bilayer. Positions 145-233 (MMMDATFSAV…EDRAANSAKS (89 aa)) are targeting to peroxisomes. Over 156 to 174 (NSFRAVLDVANHFSRLKIH) the chain is Cytoplasmic. Residues 175 to 192 (FTKVFSAFALVRTIRYLY) form a helical membrane-spanning segment. Positions 175–196 (FTKVFSAFALVRTIRYLYRRLQ) are interaction with PEX19. Residues 193–233 (RRLQWMIGLRRGLENEDLWAESEGTVACLGAEDRAANSAKS) are Peroxisomal matrix-facing. A helical membrane pass occupies residues 234–254 (WPIFLFFAVILGGPYLIWKLL). Residues 255–403 (STHSDEVTDS…TGKNGDKQDL (149 aa)) are Cytoplasmic-facing. An SH3 domain is found at 272–336 (DDHVVARAEY…PANYVKILGK (65 aa)). At Ser354 the chain carries Phosphoserine.

The protein belongs to the peroxin-13 family. As to quaternary structure, interacts (via SH3 domain) with PEX14 (via SH3-binding motif); forming the PEX13-PEX14 docking complex. Interacts with PEX19.

It localises to the peroxisome membrane. Its function is as follows. Component of the PEX13-PEX14 docking complex, a translocon channel that specifically mediates the import of peroxisomal cargo proteins bound to PEX5 receptor. The PEX13-PEX14 docking complex forms a large import pore which can be opened to a diameter of about 9 nm. Mechanistically, PEX5 receptor along with cargo proteins associates with the PEX14 subunit of the PEX13-PEX14 docking complex in the cytosol, leading to the insertion of the receptor into the organelle membrane with the concomitant translocation of the cargo into the peroxisome matrix. Involved in the import of PTS1- and PTS2-type containing proteins. This is Peroxisomal membrane protein PEX13 (PEX13) from Bos taurus (Bovine).